The sequence spans 105 residues: Secreted effector protein PINE1 (105 aa).

Positions 1-21 (MKLSQPLSIFAILAASTVAVA) are cleaved as a signal peptide.

As to quaternary structure, interacts with Arabidopsis thaliana PGIP1.

It is found in the secreted. Effector protein required for full virulence. Directly interacts with and functionally inactivates PG-inhibiting proteins (PGIPs). PGIPs are a defense mechanism of infected plants, that inhibit the plant pathogens secreted polygalacturonases (PGs) used to degrade the plant cell wall. Excerts its function by interacting with host PGIPs to negate their polygalacturonase-inhibiting function via enhanced dissociation of PGIPs from PGs. The chain is Secreted effector protein PINE1 from Sclerotinia sclerotiorum (strain ATCC 18683 / 1980 / Ss-1) (White mold).